A 133-amino-acid polypeptide reads, in one-letter code: Adenosine 5'-monophosphoramidase hnt1 (133 aa).

Positions 4-107 (IFCKIVKGDI…IPKPNEEYGL (104 aa)) constitute an HIT domain. AMP is bound by residues 29–30 (DI), Asn81, 87–89 (HQF), and 94–96 (HFH). The Histidine triad motif signature appears at 92–96 (HVHFH). Residue His94 is the Tele-AMP-histidine intermediate of the active site.

This sequence belongs to the HINT family. Homodimer. Requires Mg(2+) as cofactor.

It is found in the nucleus. It catalyses the reaction adenosine 5'-phosphoramidate + H2O = AMP + NH4(+). Functionally, hydrolyzes adenosine 5'-monophosphoramidate substrates such as AMP-morpholidate, AMP-N-alanine methyl ester, AMP-alpha-acetyl lysine methyl ester and AMP-NH2. In Schizosaccharomyces pombe (strain 972 / ATCC 24843) (Fission yeast), this protein is Adenosine 5'-monophosphoramidase hnt1 (hnt1).